The primary structure comprises 449 residues: Protein tweety homolog 1 (449 aa).

Residues 1 to 43 are Extracellular-facing; that stretch reads MSSSHGYRASWWTYILHQVPHTNFQFEVVDNQFAPQEWPYQQA. A helical transmembrane segment spans residues 44–64; the sequence is LLFLASIAGLCLAISLILICV. Residues 65 to 86 lie on the Cytoplasmic side of the membrane; sequence YLIRFCCCSSQEDDDSKSHRVC. The helical transmembrane segment at 87 to 107 threads the bilayer; that stretch reads CVTWSCVAAVIICCAGIGIGF. Over 108–212 the chain is Extracellular; sequence YGNSETNDGV…QVNFIEDYRW (105 aa). N-linked (GlcNAc...) asparagine glycosylation is present at asparagine 128. The chain crosses the membrane as a helical span at residues 213-233; it reads LAYILLLLLDLIICLFTLLGL. At 234-238 the chain is on the cytoplasmic side; it reads AKQIK. The chain crosses the membrane as a helical span at residues 239–259; the sequence is WLVIVMTVVSFFVLLLSWGSM. The Extracellular segment spans residues 260–388; sequence GLEMATAVGL…LKGLCYDGME (129 aa). 2 disulfides stabilise this stretch: cysteine 273–cysteine 383 and cysteine 301–cysteine 368. Residues asparagine 282 and asparagine 353 are each glycosylated (N-linked (GlcNAc...) asparagine). Residues 389–409 traverse the membrane as a helical segment; the sequence is GILFLLLFSFLSALSFTAAIC. Residues 410–449 are Cytoplasmic-facing; sequence SLPRAWKRFQNRDLDYDDMDEDDPFNPQESKRFVQWQSSI.

Belongs to the tweety family. Homotetramer; disulfide-linked. Homodimer.

The protein resides in the cell membrane. It catalyses the reaction chloride(in) = chloride(out). It carries out the reaction L-glutamate(out) = L-glutamate(in). May act as a calcium-independent, swelling-dependent volume-regulated anion channel (VRAC-swell) which plays a pivotal role in the process of regulatory volume decrease (RVD) in the brain through the efflux of anions like chloride and organic osmolytes like glutamate. This Xenopus tropicalis (Western clawed frog) protein is Protein tweety homolog 1 (ttyh1).